The primary structure comprises 684 residues: Fidgetin-like protein 2 (684 aa).

Polar residues predominate over residues 27-41; sequence PEQHLDVSSTTSSPA. Disordered regions lie at residues 27-48, 99-179, and 292-403; these read PEQH…ELYS, PGAF…PHSS, and LDEE…SDPM. Residues 160-179 are compositionally biased toward low complexity; it reads SNLSDSGYSGSSSCSGPHSS. Position 431 (A431) interacts with ATP.

This sequence belongs to the AAA ATPase family. Mg(2+) is required as a cofactor. In terms of tissue distribution, highly expressed in vascular endothelial cells and neuronal cells.

It is found in the cytoplasm. Its subcellular location is the cell cortex. The catalysed reaction is ATP + H2O = ADP + phosphate + H(+). Its function is as follows. Microtubule-severing enzyme that negatively regulates cell migration and wound healing. In migrating cells, targets dynamic microtubules (MTs) at the leading edge and severs them, thereby suppressing motility. Negative regulator of axon regeneration that suppresses axonal growth by selectively severing dynamic MTs in the distal axon shaft and growth cone. Contributes to proper cell branching during endothelial and neuronal development. The polypeptide is Fidgetin-like protein 2 (fignl2) (Danio rerio (Zebrafish)).